The chain runs to 688 residues: Lipase (688 aa).

Positions 1 to 35 are cleaved as a signal peptide; that stretch reads MKTRQNKYSIRKFSVGASSILIAALLFMGGGSAQA. The tract at residues 31 to 309 is disordered; that stretch reads GSAQAAEQQQ…KSAKQKQYKN (279 aa). Residues 36–302 constitute a propeptide, removed in mature form; that stretch reads AEQQQDKGTV…KNEDQTNKSA (267 aa). Polar residues predominate over residues 45–54; the sequence is VENSTTQSIG. A compositionally biased stretch (low complexity) spans 68–79; the sequence is NKNVNEKSNVNS. Basic and acidic residues-rich tracts occupy residues 84-95 and 103-143; these read ESLHNETPKNED and SQND…KHAS. Residues 144-172 are compositionally biased toward polar residues; sequence ENNQTLHSKAAQSNEDVKTKPSQLDNTAA. The segment covering 173 to 183 has biased composition (basic and acidic residues); that stretch reads KQEDSQKENLS. Residues 184 to 211 show a composition bias toward polar residues; sequence KQDTQSSKTTDLLRATAQNQSKDSQSTE. Basic and acidic residues predominate over residues 240-267; it reads SKEEPLKVDKQANPTTDKDKSSKNDKGS. The segment covering 274–289 has biased composition (polar residues); it reads LESNAVATTNKQSKQQ. Residue Ser418 is the Nucleophile of the active site. Asp609 (charge relay system) is an active-site residue. Residue Asp647 coordinates Ca(2+). The active-site Charge relay system is His648. The Ca(2+) site is built by Asp650, Asp655, and Asp658.

This sequence belongs to the AB hydrolase superfamily. Lipase family.

Its subcellular location is the secreted. The enzyme catalyses a triacylglycerol + H2O = a diacylglycerol + a fatty acid + H(+). In Staphylococcus epidermidis (strain ATCC 12228 / FDA PCI 1200), this protein is Lipase (lip).